Consider the following 321-residue polypeptide: MTKFALVGDVGGTNARLALCDLASGEISRAKTYSGLDYPSLEAVVRVYLEEHQVTVNEGCIAIACPITGDWVAMTNHTWAFSIAEMKRNLGFAHLEIINDFTAVSMAIPMLKAEHLIQFGGSAPVAGKPIAVYGAGTGLGVAHLVHVDKRWVSLPGEGGHVDFAPNSEEEGIILEELRAELGHVSAERVLSGPGLVNLYRAIVKSDGRLPENLQPREVTERALADSCTDCRRALSLFCVIMGRFGGNLALTLGTFGGVYIAGGIVPRFLEFFKASGFRGGFEDKGRFKAYVQDIPVYLIVHENPGLLGSGAHLRQTLGQVL.

8-13 (GDVGGT) is a binding site for ATP.

This sequence belongs to the bacterial glucokinase family.

It is found in the cytoplasm. The catalysed reaction is D-glucose + ATP = D-glucose 6-phosphate + ADP + H(+). This is Glucokinase from Klebsiella pneumoniae (strain 342).